We begin with the raw amino-acid sequence, 364 residues long: Ribosomal RNA large subunit methyltransferase M (364 aa).

Residues Ser-198, 231–234, Asp-250, Asp-270, and Asp-286 each bind S-adenosyl-L-methionine; that span reads APGG. Lys-315 acts as the Proton acceptor in catalysis.

This sequence belongs to the class I-like SAM-binding methyltransferase superfamily. RNA methyltransferase RlmE family. RlmM subfamily. Monomer.

The protein resides in the cytoplasm. It catalyses the reaction cytidine(2498) in 23S rRNA + S-adenosyl-L-methionine = 2'-O-methylcytidine(2498) in 23S rRNA + S-adenosyl-L-homocysteine + H(+). Catalyzes the 2'-O-methylation at nucleotide C2498 in 23S rRNA. This Thauera aminoaromatica protein is Ribosomal RNA large subunit methyltransferase M.